A 1430-amino-acid chain; its full sequence is Death-associated protein kinase 1 (1430 aa).

In terms of domain architecture, Protein kinase spans 13–275 (YDTGEELGSG…IQDSLQHPWI (263 aa)). Residues 19–27 (LGSGQFAVV), Lys42, 94–96 (ELV), and Glu100 each bind ATP. The active-site Proton acceptor is the Asp139. Residue Asp161 participates in ATP binding. The segment at 267-334 (QDSLQHPWIK…RSNMSVARSD (68 aa)) is calmodulin-binding. The residue at position 289 (Ser289) is a Phosphoserine; by RPS6KA1 and RPS6KA3. The autoinhibitory domain stretch occupies residues 292–301 (NMEKFKKFAA). Residue Ser308 is modified to Phosphoserine; by autocatalysis. Phosphoserine is present on residues Ser319 and Ser333. 8 ANK repeats span residues 378-407 (HGTP…RIDV), 411-440 (GGSN…PLDV), 444-473 (SGEM…NPNI), 477-506 (EEET…NVNI), 510-539 (EGET…DLNA), 543-572 (DGHI…FVDY), 576-605 (HGNT…NLDI), and 609-638 (YGRT…SVEA). In terms of domain architecture, Roc spans 681–955 (TQNLQPRIKL…NHLQEIRSQI (275 aa)). Ser734 is subject to Phosphoserine; by MAPK1. An ANK 9 repeat occupies 875–904 (KLKNPLQVVLVATHADIMNVPRPAGGEFGY). Ser1115 is modified (phosphoserine). The stretch at 1162–1196 (EGDADIRLWVNGCKLANRGAELLVLLVNHGQGIEV) is one ANK 10 repeat. Residues 1312-1396 (KLSRLLDPPD…DAADFLLKAS (85 aa)) enclose the Death domain.

It belongs to the protein kinase superfamily. CAMK Ser/Thr protein kinase family. DAP kinase subfamily. As to quaternary structure, interacts with KLHL20. Interacts (via death domain) with MAPK1 and MAPK3. Interacts with MAP1B (via N-terminus). Interacts with PRKD1 in an oxidative stress-regulated manner. Interacts with PIN1, PDCD6, BECN1, TSC2 and STX1A. Interacts (via kinase domain) with DAPK3 (via kinase domain). Interacts with GRINB. Interacts (via death domain) with UNC5B (via death domain). Interacts with UNC5C (via death domain). The cofactor is Mg(2+). Post-translationally, ubiquitinated by the BCR(KLHL20) E3 ubiquitin ligase complex, leading to its degradation by the proteasome. In terms of processing, removal of the C-terminal tail of isoform 2 (corresponding to amino acids 296-337 of isoform 2) by proteolytic cleavage stimulates maximally its membrane-blebbing function. In response to mitogenic stimulation (PMA or EGF), phosphorylated at Ser-289; phosphorylation suppresses DAPK1 pro-apoptotic function. Autophosphorylation at Ser-308 inhibits its catalytic activity. Phosphorylation at Ser-734 by MAPK1 increases its catalytic activity and promotes cytoplasmic retention of MAPK1. Endoplasmic-stress can cause dephosphorylation at Ser-308. As to expression, isoform 2 is expressed in normal intestinal tissue as well as in colorectal carcinomas.

The protein resides in the cytoplasm. Its subcellular location is the cytoskeleton. It catalyses the reaction L-seryl-[protein] + ATP = O-phospho-L-seryl-[protein] + ADP + H(+). The enzyme catalyses L-threonyl-[protein] + ATP = O-phospho-L-threonyl-[protein] + ADP + H(+). Activated by Ca(2+)/calmodulin. Regulated by a locking mechanism, involving autophosphorylation at Ser-308 and calmodulin binding. In the inactive state, Ser-308 is phosphorylated. Activation involves its dephosphorylation and a release-of-autoinhibition mechanism where binding of calmodulin induces a conformational change that relieves the steric block of the active site by the autoinhibitory domain. Activity is modulated by UNC5B and NTN1. UNC5B activates it by inhibiting the phosphorylation at Ser-308, whereas NTN1 inhibits UNC5B-mediated activation of DAPK1. Endoplasmic-stress activates by causing Ser-308 dephosphorylation. Its function is as follows. Calcium/calmodulin-dependent serine/threonine kinase involved in multiple cellular signaling pathways that trigger cell survival, apoptosis, and autophagy. Regulates both type I apoptotic and type II autophagic cell deaths signal, depending on the cellular setting. The former is caspase-dependent, while the latter is caspase-independent and is characterized by the accumulation of autophagic vesicles. Phosphorylates PIN1 resulting in inhibition of its catalytic activity, nuclear localization, and cellular function. Phosphorylates TPM1, enhancing stress fiber formation in endothelial cells. Phosphorylates STX1A and significantly decreases its binding to STXBP1. Phosphorylates PRKD1 and regulates JNK signaling by binding and activating PRKD1 under oxidative stress. Phosphorylates BECN1, reducing its interaction with BCL2 and BCL2L1 and promoting the induction of autophagy. Phosphorylates TSC2, disrupting the TSC1-TSC2 complex and stimulating mTORC1 activity in a growth factor-dependent pathway. Phosphorylates RPS6, MYL9 and DAPK3. Acts as a signaling amplifier of NMDA receptors at extrasynaptic sites for mediating brain damage in stroke. Cerebral ischemia recruits DAPK1 into the NMDA receptor complex and it phosphorylates GRINB at Ser-1303 inducing injurious Ca(2+) influx through NMDA receptor channels, resulting in an irreversible neuronal death. Required together with DAPK3 for phosphorylation of RPL13A upon interferon-gamma activation which is causing RPL13A involvement in transcript-selective translation inhibition. In terms of biological role, isoform 2 cannot induce apoptosis but can induce membrane blebbing. This is Death-associated protein kinase 1 (DAPK1) from Homo sapiens (Human).